The primary structure comprises 674 residues: DNA mismatch repair protein MutL (674 aa).

The protein belongs to the DNA mismatch repair MutL/HexB family.

In terms of biological role, this protein is involved in the repair of mismatches in DNA. It is required for dam-dependent methyl-directed DNA mismatch repair. May act as a 'molecular matchmaker', a protein that promotes the formation of a stable complex between two or more DNA-binding proteins in an ATP-dependent manner without itself being part of a final effector complex. In Clostridium perfringens (strain ATCC 13124 / DSM 756 / JCM 1290 / NCIMB 6125 / NCTC 8237 / Type A), this protein is DNA mismatch repair protein MutL.